The primary structure comprises 198 residues: Remorin (198 aa).

Residues 1–11 (MAELEAKKVEI) show a composition bias toward basic and acidic residues. The tract at residues 1–24 (MAELEAKKVEIVDPAPPAPGPVEA) is disordered. Residues 97–184 (EESEKSKAEN…LKAEELAAKY (88 aa)) are a coiled coil.

The protein belongs to the remorin family. In terms of processing, the N-terminus is blocked. Post-translationally, phosphorylated.

Its subcellular location is the cell membrane. Its function is as follows. Binds to both simple and complex galacturonides. May be involved in cell-to-cell signaling and molecular transport. In Solanum tuberosum (Potato), this protein is Remorin.